We begin with the raw amino-acid sequence, 249 residues long: MLIQAVTIFPEMFDSITRYGVTGRANRQGIWQFEAVNPRKFADNRLGYIDDRPFGGGPGMIMMAPPLHAAIEHAKAQSSQTAKVIYLSPQGKPLTHQKAAELAELTHLILLCGRYEGIDERLLQSSVDEEISIGDFVVSGGELPAMMLMDAVLRLVPGILGDIQSAEQDSFSSGILDCPHYTKPLEFQGMAVPEVLRSGNHGLIAEWRLEQSLRRTLERRPDLLEKRVLIPKESRLLNKILQEQREIQS.

Residues Gly113 and 133 to 138 (IGDFVV) each bind S-adenosyl-L-methionine.

This sequence belongs to the RNA methyltransferase TrmD family. Homodimer.

The protein localises to the cytoplasm. The enzyme catalyses guanosine(37) in tRNA + S-adenosyl-L-methionine = N(1)-methylguanosine(37) in tRNA + S-adenosyl-L-homocysteine + H(+). In terms of biological role, specifically methylates guanosine-37 in various tRNAs. This Neisseria gonorrhoeae (strain ATCC 700825 / FA 1090) protein is tRNA (guanine-N(1)-)-methyltransferase.